The primary structure comprises 413 residues: Sulfoquinovose isomerase (413 aa).

6-sulfo-beta-D-quinovose contacts are provided by R55, Y111, N172, H176, and R238. The active-site Proton donor/acceptor is the H248. 6-sulfo-beta-D-quinovose is bound by residues E251, Q362, Q379, and H383. H383 serves as the catalytic Proton donor/acceptor.

This sequence belongs to the N-acylglucosamine 2-epimerase family. Homohexamer.

The catalysed reaction is 6-sulfo-beta-D-quinovose = 6-deoxy-6-sulfo-D-fructose. It catalyses the reaction 6-sulfo-beta-D-quinovose = 6-sulfo-D-rhamnose. With respect to regulation, significantly inhibited by Cu(2+), Fe(3+) and Co(2+). Partially inhibited by Mg(2+), Ca(2+) and Mn(2+). Also inhibited by ATP, ADP, dATP, TTP and GTP. In terms of biological role, catalyzes the isomerization of sulfoquinovose (SQ) to 6-deoxy-6-sulfo-D-fructose (SF). Can also catalyze the interconversion of SQ and sulforhamnose (SR). Has a clear preference for beta-SQ and little-to-no activity on alpha-SQ. In vitro, can also catalyze the interconversion of mannose, fructose and glucose, or lyxose and xylulose, but has extremely low activity with glucose. This Escherichia coli (strain K12) protein is Sulfoquinovose isomerase (yihS).